A 488-amino-acid chain; its full sequence is MAEATDVVLVGGGIMSATLGVLLKELEPSWEITLIERLEDVALESSNAWNNAGTGHSALCELNYAPLGANGIIDPARALNIAEQFHVSRQFWATLVAEGKLEDNSFINAVPHMSLVMNEDHCSYLQKRYDAFKTQKLFENMEFSTDRNKISDWAPLMMRGRDENQPVAANYSAEGTDVDFGRLTRQMVKYLQGKGVKTEFNRHVEDIKRESDGAWVLKTADTRNPDGQLTLRTRFLFLGAGGGALTLLQKSGIPEGKGYGGFPVSGLFFRNSNPETAEQHNAKVYGQASVGAPPMSVPHLDTRNVDGKRHLMFGPYAGFRSNFLKQGSLMDLPLSIHMDNLYPMLRAGWANMPLTKYLLGELRKTKEERFASLLEYYPEANPDDWELITAGQRVQIIKKDSEKGGVLQFGTEIVAHADGSLAALLGASPGASTAVPLMIRLMHQCFPERTPSWEGRLKELVPGYGIKLNENPERADEIIAYTAKVLDI.

Belongs to the MQO family. FAD serves as cofactor.

The enzyme catalyses (S)-malate + a quinone = a quinol + oxaloacetate. It functions in the pathway carbohydrate metabolism; tricarboxylic acid cycle; oxaloacetate from (S)-malate (quinone route): step 1/1. The polypeptide is Probable malate:quinone oxidoreductase (Neisseria meningitidis serogroup A / serotype 4A (strain DSM 15465 / Z2491)).